The chain runs to 336 residues: 4-hydroxythreonine-4-phosphate dehydrogenase (336 aa).

Threonine 140 lines the substrate pocket. Histidine 171, histidine 216, and histidine 271 together coordinate a divalent metal cation. Substrate-binding residues include lysine 279, asparagine 288, and arginine 297.

Belongs to the PdxA family. In terms of assembly, homodimer. The cofactor is Zn(2+). It depends on Mg(2+) as a cofactor. Requires Co(2+) as cofactor.

It is found in the cytoplasm. The catalysed reaction is 4-(phosphooxy)-L-threonine + NAD(+) = 3-amino-2-oxopropyl phosphate + CO2 + NADH. It participates in cofactor biosynthesis; pyridoxine 5'-phosphate biosynthesis; pyridoxine 5'-phosphate from D-erythrose 4-phosphate: step 4/5. Functionally, catalyzes the NAD(P)-dependent oxidation of 4-(phosphooxy)-L-threonine (HTP) into 2-amino-3-oxo-4-(phosphooxy)butyric acid which spontaneously decarboxylates to form 3-amino-2-oxopropyl phosphate (AHAP). This is 4-hydroxythreonine-4-phosphate dehydrogenase from Erythrobacter litoralis (strain HTCC2594).